The sequence spans 571 residues: Urease subunit alpha (571 aa).

A Urease domain is found at 132 to 571; sequence GAIDTHIHFI…LPMGQKYFLF (440 aa). 3 residues coordinate Ni(2+): His137, His139, and Lys220. An N6-carboxylysine modification is found at Lys220. Position 222 (His222) interacts with substrate. Positions 249 and 275 each coordinate Ni(2+). Residue His323 is the Proton donor of the active site. Asp363 provides a ligand contact to Ni(2+).

It belongs to the metallo-dependent hydrolases superfamily. Urease alpha subunit family. Heterotrimer of UreA (gamma), UreB (beta) and UreC (alpha) subunits. Three heterotrimers associate to form the active enzyme. Ni cation is required as a cofactor. Carboxylation allows a single lysine to coordinate two nickel ions.

It is found in the cytoplasm. It carries out the reaction urea + 2 H2O + H(+) = hydrogencarbonate + 2 NH4(+). Its pathway is nitrogen metabolism; urea degradation; CO(2) and NH(3) from urea (urease route): step 1/1. The chain is Urease subunit alpha from Corynebacterium urealyticum (strain ATCC 43042 / DSM 7109).